We begin with the raw amino-acid sequence, 153 residues long: UPF0756 membrane protein BCB4264_A4705 (153 aa).

4 consecutive transmembrane segments (helical) span residues 8 to 28 (FLFI…TVAI), 54 to 74 (LGVT…EIGF), 87 to 107 (WIAL…VQLL), and 117 to 137 (LVFG…GPLI).

The protein belongs to the UPF0756 family.

The protein resides in the cell membrane. This is UPF0756 membrane protein BCB4264_A4705 from Bacillus cereus (strain B4264).